Consider the following 22-residue polypeptide: Chlorophyllase type 1 (22 aa).

This sequence belongs to the AB hydrolase superfamily. Lipase family.

It carries out the reaction a chlorophyll + H2O = a chlorophyllide + phytol + H(+). The protein operates within porphyrin-containing compound metabolism; chlorophyll degradation. In terms of biological role, catalyzes the hydrolysis of ester bond in chlorophyll to yield chlorophyllide and phytol. This chain is Chlorophyllase type 1, found in Chenopodium album (Fat hen).